Here is a 322-residue protein sequence, read N- to C-terminus: Adenine deaminase (322 aa).

The Zn(2+) site is built by His11, His13, and His189. Residue Glu192 is the Proton donor of the active site. Zn(2+) is bound at residue Asp270. Asp271 lines the substrate pocket.

This sequence belongs to the metallo-dependent hydrolases superfamily. Adenosine and AMP deaminases family. Adenine deaminase type 2 subfamily. Zn(2+) is required as a cofactor.

The catalysed reaction is adenine + H2O + H(+) = hypoxanthine + NH4(+). In terms of biological role, catalyzes the hydrolytic deamination of adenine to hypoxanthine. Plays an important role in the purine salvage pathway and in nitrogen catabolism. This is Adenine deaminase from Rhizobium leguminosarum bv. trifolii (strain WSM2304).